Here is a 252-residue protein sequence, read N- to C-terminus: Phosphate import ATP-binding protein PstB (252 aa).

The ABC transporter domain maps to 5 to 247; it reads LIASDVNIFY…PRDERTEAYV (243 aa). Residue 37–44 coordinates ATP; it reads GPSGCGKT.

This sequence belongs to the ABC transporter superfamily. Phosphate importer (TC 3.A.1.7) family. In terms of assembly, the complex is composed of two ATP-binding proteins (PstB), two transmembrane proteins (PstC and PstA) and a solute-binding protein (PstS).

The protein resides in the cell membrane. The enzyme catalyses phosphate(out) + ATP + H2O = ADP + 2 phosphate(in) + H(+). In terms of biological role, part of the ABC transporter complex PstSACB involved in phosphate import. Responsible for energy coupling to the transport system. The protein is Phosphate import ATP-binding protein PstB of Deinococcus geothermalis (strain DSM 11300 / CIP 105573 / AG-3a).